Reading from the N-terminus, the 890-residue chain is Agglutinin-like protein ARB_02240 (890 aa).

The N-terminal stretch at Met-1–Ala-20 is a signal peptide. N-linked (GlcNAc...) asparagine glycosylation is found at Asn-106, Asn-217, Asn-583, and Asn-654. Positions Ile-680–Thr-872 are disordered. 2 stretches are compositionally biased toward low complexity: residues Thr-693–Ser-753 and Thr-760–Thr-790. Polar residues predominate over residues Gly-791–Pro-802. 2 stretches are compositionally biased toward low complexity: residues Ser-803–Thr-812 and Ser-821–Thr-837. Gly residues predominate over residues Thr-838–Thr-848. The GPI-anchor amidated glycine moiety is linked to residue Gly-864. Residues Ala-865 to Ile-890 constitute a propeptide, removed in mature form.

This sequence belongs to the ALS family. In terms of processing, the GPI-anchor is attached to the protein in the endoplasmic reticulum and serves to target the protein to the cell surface. There, the glucosamine-inositol phospholipid moiety is cleaved off and the GPI-modified mannoprotein is covalently attached via its lipidless GPI glycan remnant to the 1,6-beta-glucan of the outer cell wall layer.

It is found in the secreted. The protein resides in the cell membrane. Its subcellular location is the cell wall. In terms of biological role, cell surface adhesion protein which mediates cell agglutination and host tissue adherence. This Arthroderma benhamiae (strain ATCC MYA-4681 / CBS 112371) (Trichophyton mentagrophytes) protein is Agglutinin-like protein ARB_02240.